The primary structure comprises 579 residues: Glutamate--tRNA ligase (579 aa).

Residues 114 to 124 carry the 'HIGH' region motif; sequence PNPNGPWHIGH.

This sequence belongs to the class-I aminoacyl-tRNA synthetase family. Glutamate--tRNA ligase type 2 subfamily.

It localises to the cytoplasm. The catalysed reaction is tRNA(Glu) + L-glutamate + ATP = L-glutamyl-tRNA(Glu) + AMP + diphosphate. Catalyzes the attachment of glutamate to tRNA(Glu) in a two-step reaction: glutamate is first activated by ATP to form Glu-AMP and then transferred to the acceptor end of tRNA(Glu). In Haloarcula marismortui (strain ATCC 43049 / DSM 3752 / JCM 8966 / VKM B-1809) (Halobacterium marismortui), this protein is Glutamate--tRNA ligase.